A 77-amino-acid chain; its full sequence is Acyl carrier protein (77 aa).

In terms of domain architecture, Carrier spans M1 to K76. At S36 the chain carries O-(pantetheine 4'-phosphoryl)serine.

Belongs to the acyl carrier protein (ACP) family. 4'-phosphopantetheine is transferred from CoA to a specific serine of apo-ACP by AcpS. This modification is essential for activity because fatty acids are bound in thioester linkage to the sulfhydryl of the prosthetic group.

Its subcellular location is the cytoplasm. The protein operates within lipid metabolism; fatty acid biosynthesis. Carrier of the growing fatty acid chain in fatty acid biosynthesis. The chain is Acyl carrier protein from Leptospira borgpetersenii serovar Hardjo-bovis (strain JB197).